The chain runs to 246 residues: U2 small nuclear ribonucleoprotein A' (246 aa).

LRR repeat units follow at residues 19-40 (RDRELDLRGLKIPAIENLGVTR), 42-63 (QNDAIDLTDNDIRYLGNFPLLQ), 64-85 (QLKTLQLANNLISRIDPRIGHS), and 88-109 (ALHSLNLTNNCISDLSELVHLS). The 39-residue stretch at 122–160 (TPASREAQYREFVIWKLPQVRVLDYQRIKDKERARAKDL) folds into the LRRCT domain.

The protein belongs to the U2 small nuclear ribonucleoprotein A family. Associated with the spliceosome.

It localises to the nucleus. Its function is as follows. Involved in pre-mRNA splicing. This Mycosarcoma maydis (Corn smut fungus) protein is U2 small nuclear ribonucleoprotein A' (LEA1).